Reading from the N-terminus, the 509-residue chain is Coiled-coil domain-containing protein 181 (509 aa).

A compositionally biased stretch (basic and acidic residues) spans 60–82 (EHTKQHSDPDKSLQDDVSPRRND). 2 disordered regions span residues 60 to 121 (EHTK…EEDE) and 285 to 367 (GEPL…EEKE). Residues 320–334 (RTQSARISPVTSTYC) are compositionally biased toward polar residues. A coiled-coil region spans residues 335 to 375 (LSPRQKELQKQLEQKREKLKREEEQRKIEEEKEKKRENDIV). The span at 338–367 (RQKELQKQLEQKREKLKREEEQRKIEEEKE) shows a compositional bias: basic and acidic residues.

Belongs to the CCDC181 family. As to quaternary structure, homodimer. Interacts with HOOK1. Interacts with HOOK2. Interacts with HOOK3.

Its subcellular location is the cytoplasm. It is found in the cytoskeleton. The protein resides in the cell projection. The protein localises to the cilium. It localises to the flagellum. Microtubule-binding protein that localizes to the microtubular manchette of elongating spermatids. The polypeptide is Coiled-coil domain-containing protein 181 (Macaca fascicularis (Crab-eating macaque)).